The following is a 562-amino-acid chain: Urocanate hydratase (562 aa).

Residues Gly53–Gly54, Gln131, Gly177–Gly179, Glu197, Arg202, Asn243–Ala244, Gln268–His272, Tyr278–Leu279, and Tyr327 contribute to the NAD(+) site. Cys415 is a catalytic residue. Gly497 contacts NAD(+).

The protein belongs to the urocanase family. Requires NAD(+) as cofactor.

Its subcellular location is the cytoplasm. It catalyses the reaction 4-imidazolone-5-propanoate = trans-urocanate + H2O. It functions in the pathway amino-acid degradation; L-histidine degradation into L-glutamate; N-formimidoyl-L-glutamate from L-histidine: step 2/3. Functionally, catalyzes the conversion of urocanate to 4-imidazolone-5-propionate. In Chelativorans sp. (strain BNC1), this protein is Urocanate hydratase.